Here is a 360-residue protein sequence, read N- to C-terminus: Mannonate dehydratase (360 aa).

This sequence belongs to the mannonate dehydratase family. Requires Fe(2+) as cofactor. The cofactor is Mn(2+).

It carries out the reaction D-mannonate = 2-dehydro-3-deoxy-D-gluconate + H2O. It participates in carbohydrate metabolism; pentose and glucuronate interconversion. Catalyzes the dehydration of D-mannonate. In Thermotoga sp. (strain RQ2), this protein is Mannonate dehydratase.